The following is a 547-amino-acid chain: Glucose-6-phosphate isomerase (547 aa).

Catalysis depends on Glu353, which acts as the Proton donor. Catalysis depends on residues His384 and Lys512.

This sequence belongs to the GPI family.

The protein localises to the cytoplasm. The enzyme catalyses alpha-D-glucose 6-phosphate = beta-D-fructose 6-phosphate. Its pathway is carbohydrate biosynthesis; gluconeogenesis. The protein operates within carbohydrate degradation; glycolysis; D-glyceraldehyde 3-phosphate and glycerone phosphate from D-glucose: step 2/4. In terms of biological role, catalyzes the reversible isomerization of glucose-6-phosphate to fructose-6-phosphate. The protein is Glucose-6-phosphate isomerase of Campylobacter jejuni subsp. doylei (strain ATCC BAA-1458 / RM4099 / 269.97).